The primary structure comprises 446 residues: Glutamine synthetase (446 aa).

The GS beta-grasp domain maps to 18–103 (ENVRYLRLQF…LICDVFKTDG (86 aa)). Residues 110–446 (PRANLKRVLR…WEREQYIKQY (337 aa)) enclose the GS catalytic domain. Positions 134 and 136 each coordinate Mg(2+). Glu-186 lines the ATP pocket. The Mg(2+) site is built by Glu-191 and Glu-198. Residues 242–243 (NG) and Gly-243 contribute to the L-glutamate site. His-247 contributes to the Mg(2+) binding site. Ser-251 lines the ATP pocket. L-glutamate is bound by residues Arg-300, Glu-306, and Arg-318. Arg-318 and Arg-323 together coordinate ATP. Glu-335 lines the Mg(2+) pocket. Residue Arg-337 participates in L-glutamate binding.

This sequence belongs to the glutamine synthetase family. As to quaternary structure, oligomer of 12 subunits arranged in the form of two hexagons. In its feedback-inhibited form, interacts with TnrA in order to block its DNA-binding activity. The cofactor is Mg(2+).

It localises to the cytoplasm. It catalyses the reaction L-glutamate + NH4(+) + ATP = L-glutamine + ADP + phosphate + H(+). With respect to regulation, inhibited by glutamine. Glutamine synthetase (GS) is an unusual multitasking protein that functions as an enzyme, a transcription coregulator, and a chaperone in ammonium assimilation and in the regulation of genes involved in nitrogen metabolism. It catalyzes the ATP-dependent biosynthesis of glutamine from glutamate and ammonia. Feedback-inhibited GlnA also interacts with and regulates the activity of the transcriptional regulator TnrA. During nitrogen limitation, TnrA is in its DNA-binding active state and turns on the transcription of genes required for nitrogen assimilation. Under conditions of nitrogen excess, feedback-inhibited GlnA forms a stable complex with TnrA, which inhibits its DNA-binding activity. In contrast, feedback-inhibited GlnA acts as a chaperone to stabilize the DNA-binding activity of GlnR, which represses the transcription of nitrogen assimilation genes. The chain is Glutamine synthetase from Staphylococcus epidermidis (strain ATCC 35984 / DSM 28319 / BCRC 17069 / CCUG 31568 / BM 3577 / RP62A).